A 401-amino-acid chain; its full sequence is CCA-adding enzyme (401 aa).

ATP contacts are provided by G32 and R35. The CTP site is built by G32 and R35. D45 and D47 together coordinate Mg(2+). R116, D159, R162, R165, and R168 together coordinate ATP. CTP contacts are provided by R116, D159, R162, R165, and R168.

Belongs to the tRNA nucleotidyltransferase/poly(A) polymerase family. Bacterial CCA-adding enzyme type 3 subfamily. Homodimer. Mg(2+) serves as cofactor.

It catalyses the reaction a tRNA precursor + 2 CTP + ATP = a tRNA with a 3' CCA end + 3 diphosphate. The catalysed reaction is a tRNA with a 3' CCA end + 2 CTP + ATP = a tRNA with a 3' CCACCA end + 3 diphosphate. Its function is as follows. Catalyzes the addition and repair of the essential 3'-terminal CCA sequence in tRNAs without using a nucleic acid template. Adds these three nucleotides in the order of C, C, and A to the tRNA nucleotide-73, using CTP and ATP as substrates and producing inorganic pyrophosphate. tRNA 3'-terminal CCA addition is required both for tRNA processing and repair. Also involved in tRNA surveillance by mediating tandem CCA addition to generate a CCACCA at the 3' terminus of unstable tRNAs. While stable tRNAs receive only 3'-terminal CCA, unstable tRNAs are marked with CCACCA and rapidly degraded. This Streptococcus mutans serotype c (strain ATCC 700610 / UA159) protein is CCA-adding enzyme.